Here is an 869-residue protein sequence, read N- to C-terminus: Mismatch repair endonuclease PMS2 (869 aa).

Residues asparagine 44, aspartate 69, glutamate 108, alanine 109, and leucine 110 each coordinate ATP. The short motif at arginine 585–lysine 588 is the Nuclear localization signal element.

Belongs to the DNA mismatch repair MutL/HexB family.

It is found in the nucleus. It catalyses the reaction ATP + H2O = ADP + phosphate + H(+). In terms of biological role, component of the post-replicative DNA mismatch repair system (MMR). Involved in B cell growth by positively regulating B cell proliferation and controlling replication efficiency. Controls cell cycle to prevent re-replication and defects in DNA damage-induced G2 checkpoint. Doesn't seem to counteract or control the immunoglobulin gene conversion (Ig GC) and to contribute to guanine/uracil mismatch repair. Possesses an ATPase activity, but in the absence of gross structural changes, ATP hydrolysis may not be necessary for proficient mismatch repair. The protein is Mismatch repair endonuclease PMS2 of Gallus gallus (Chicken).